Consider the following 309-residue polypeptide: NAD kinase (309 aa).

Asp89 acts as the Proton acceptor in catalysis. Residues 89–90 (DG), 163–164 (NE), His174, Arg191, Asp193, and 204–209 (TAYALS) contribute to the NAD(+) site.

It belongs to the NAD kinase family. A divalent metal cation is required as a cofactor.

It is found in the cytoplasm. The catalysed reaction is NAD(+) + ATP = ADP + NADP(+) + H(+). Functionally, involved in the regulation of the intracellular balance of NAD and NADP, and is a key enzyme in the biosynthesis of NADP. Catalyzes specifically the phosphorylation on 2'-hydroxyl of the adenosine moiety of NAD to yield NADP. The sequence is that of NAD kinase from Shewanella sp. (strain W3-18-1).